Here is a 475-residue protein sequence, read N- to C-terminus: UDP-N-acetylmuramate--L-alanine ligase (475 aa).

114 to 120 (GTHGKTT) contributes to the ATP binding site.

Belongs to the MurCDEF family.

The protein localises to the cytoplasm. The catalysed reaction is UDP-N-acetyl-alpha-D-muramate + L-alanine + ATP = UDP-N-acetyl-alpha-D-muramoyl-L-alanine + ADP + phosphate + H(+). It functions in the pathway cell wall biogenesis; peptidoglycan biosynthesis. Functionally, cell wall formation. In Bartonella bacilliformis (strain ATCC 35685 / KC583 / Herrer 020/F12,63), this protein is UDP-N-acetylmuramate--L-alanine ligase.